The following is a 422-amino-acid chain: Roquefortine prenyltransferase roqD (422 aa).

E100 is a binding site for substrate. The dimethylallyl diphosphate site is built by R113, K200, and Y202. Residue Y204 coordinates substrate. Positions 268, 270, 353, 416, and 420 each coordinate dimethylallyl diphosphate.

Belongs to the tryptophan dimethylallyltransferase family.

It participates in alkaloid biosynthesis. Roquefortine prenyltransferase; part of the gene cluster that mediates the biosynthesis of the mycotoxins roquefortine C and meleagrin. The first stage is catalyzed by the dipeptide synthase roqA which condenses histidine and tryptophan to produce histidyltryptophanyldiketopiperazine (HTD). HTD is then converted to roquefortine C through two possible pathways. In the first pathway, prenyltransferase roqD transforms HTD to the intermediate roquefortine D, which is in turn converted to roquefortine C by the cytochrome P450 monooxygenase roqR. In the second pathway, HTD is first converted to the intermediate dehydrohistidyltryptophanyldi-ketopiperazine (DHTD) by roqR which is then prenylated by roqD to form roquefortine C. Roquefortine C can be further transformed to meleagrin via three more reactions including oxydation to glandicolin A by roqM, which is further reduced to glandicoline B by roqO. Finally, glandicoline B is converted to meleagrin by the glandicoline B O-methyltransferase roqN. More studies identified further branching and additional metabolites produced by the roquefortine/meleagrin cluster, including roquefortine F, roquefortine L, roquefortine M, roquefortine N and neoxaline. The chain is Roquefortine prenyltransferase roqD from Penicillium rubens (strain ATCC 28089 / DSM 1075 / NRRL 1951 / Wisconsin 54-1255) (Penicillium chrysogenum).